Reading from the N-terminus, the 517-residue chain is Crotonobetaine/carnitine--CoA ligase (517 aa).

Belongs to the ATP-dependent AMP-binding enzyme family.

The catalysed reaction is 4-(trimethylamino)butanoate + ATP + CoA = 4-(trimethylamino)butanoyl-CoA + AMP + diphosphate. The enzyme catalyses crotonobetaine + ATP + CoA = crotonobetainyl-CoA + AMP + diphosphate. It carries out the reaction (R)-carnitine + ATP + CoA = (R)-carnitinyl-CoA + AMP + diphosphate. It participates in amine and polyamine metabolism; carnitine metabolism. Catalyzes the transfer of CoA to carnitine, generating the initial carnitinyl-CoA needed for the CaiB reaction cycle. Also has activity toward crotonobetaine and gamma-butyrobetaine. The sequence is that of Crotonobetaine/carnitine--CoA ligase from Salmonella heidelberg (strain SL476).